Consider the following 251-residue polypeptide: Small ribosomal subunit protein uS3 (251 aa).

The KH type-2 domain maps to 39 to 109 (IRNYVLARLK…EVKIDVVEVI (71 aa)). Positions 221–239 (EMKRMKDRRADSKSRPRDP) are enriched in basic and acidic residues. The tract at residues 221–251 (EMKRMKDRRADSKSRPRDPRSKRRRSRTKRA) is disordered. Residues 240–251 (RSKRRRSRTKRA) are compositionally biased toward basic residues.

Belongs to the universal ribosomal protein uS3 family. Part of the 30S ribosomal subunit. Forms a tight complex with proteins S10 and S14.

In terms of biological role, binds the lower part of the 30S subunit head. Binds mRNA in the 70S ribosome, positioning it for translation. The chain is Small ribosomal subunit protein uS3 from Chlorobium limicola (strain DSM 245 / NBRC 103803 / 6330).